A 238-amino-acid polypeptide reads, in one-letter code: tRNA (guanine-N(7)-)-methyltransferase (238 aa).

The S-adenosyl-L-methionine site is built by Glu71, Glu96, Asp123, and Asp146. The active site involves Asp146. Residues Lys150, Asp182, and 217–220 (TKFE) each bind substrate.

This sequence belongs to the class I-like SAM-binding methyltransferase superfamily. TrmB family.

The enzyme catalyses guanosine(46) in tRNA + S-adenosyl-L-methionine = N(7)-methylguanosine(46) in tRNA + S-adenosyl-L-homocysteine. It participates in tRNA modification; N(7)-methylguanine-tRNA biosynthesis. In terms of biological role, catalyzes the formation of N(7)-methylguanine at position 46 (m7G46) in tRNA. The sequence is that of tRNA (guanine-N(7)-)-methyltransferase from Methylobacillus flagellatus (strain ATCC 51484 / DSM 6875 / VKM B-1610 / KT).